Consider the following 594-residue polypeptide: Aspartate--tRNA(Asp/Asn) ligase (594 aa).

Residue glutamate 173 coordinates L-aspartate. An aspartate region spans residues 197-200 (QLFK). Arginine 219 lines the L-aspartate pocket. ATP-binding positions include 219 to 221 (RDE) and glutamine 228. An L-aspartate-binding site is contributed by histidine 449. Glutamate 482 lines the ATP pocket. An L-aspartate-binding site is contributed by arginine 489. 534–537 (GLDR) is an ATP binding site.

It belongs to the class-II aminoacyl-tRNA synthetase family. Type 1 subfamily. Homodimer.

The protein localises to the cytoplasm. The enzyme catalyses tRNA(Asx) + L-aspartate + ATP = L-aspartyl-tRNA(Asx) + AMP + diphosphate. Aspartyl-tRNA synthetase with relaxed tRNA specificity since it is able to aspartylate not only its cognate tRNA(Asp) but also tRNA(Asn). Reaction proceeds in two steps: L-aspartate is first activated by ATP to form Asp-AMP and then transferred to the acceptor end of tRNA(Asp/Asn). This Saccharophagus degradans (strain 2-40 / ATCC 43961 / DSM 17024) protein is Aspartate--tRNA(Asp/Asn) ligase.